A 489-amino-acid polypeptide reads, in one-letter code: NADH-quinone oxidoreductase subunit N (489 aa).

Helical transmembrane passes span 8 to 28 (LIAMLPLLVVILTVVVVMLSI), 35 to 55 (FTIATLTATGFIIALGSLYYV), 75 to 95 (FFTALTIIAGLGTVAFAYPWL), 105 to 125 (FYMLVAIAVIGGILLSSAHHL), 127 to 147 (SMFIGIELLTLPLFGLIGYAF), 159 to 179 (YMLLSAAASSFLLFGMALLYA), 203 to 223 (VLAGLGMMLVGIGFKLSLFPF), 235 to 255 (PAPTGAFLATASKIGIFAVVM), 271 to 291 (MILGFMAIASILFGNIMALTQ), 303 to 323 (VSHLGYLLVALIVLQYSPILA), 329 to 349 (IYLAGYLFASLGAFGAIAVAS), 374 to 394 (AVVMSLMMLSLAGVPITLGFI), 407 to 427 (SLWWLTGMVVLGSAIGLFYYL), and 456 to 476 (LITLVCAIIVIVLGVWPQPLI).

The protein belongs to the complex I subunit 2 family. NDH-1 is composed of 13 different subunits. Subunits NuoA, H, J, K, L, M, N constitute the membrane sector of the complex.

It is found in the cell inner membrane. It carries out the reaction a quinone + NADH + 5 H(+)(in) = a quinol + NAD(+) + 4 H(+)(out). In terms of biological role, NDH-1 shuttles electrons from NADH, via FMN and iron-sulfur (Fe-S) centers, to quinones in the respiratory chain. The immediate electron acceptor for the enzyme in this species is believed to be ubiquinone. Couples the redox reaction to proton translocation (for every two electrons transferred, four hydrogen ions are translocated across the cytoplasmic membrane), and thus conserves the redox energy in a proton gradient. The sequence is that of NADH-quinone oxidoreductase subunit N from Proteus mirabilis (strain HI4320).